Consider the following 373-residue polypeptide: Tryptophan--tRNA ligase (373 aa).

A 'HIGH' region motif is present at residues 79–87; sequence PSGKFHFGH. A 'KMSKS' region motif is present at residues 257–261; the sequence is KMSSS.

It belongs to the class-I aminoacyl-tRNA synthetase family.

Its subcellular location is the cytoplasm. The enzyme catalyses tRNA(Trp) + L-tryptophan + ATP = L-tryptophyl-tRNA(Trp) + AMP + diphosphate + H(+). This is Tryptophan--tRNA ligase from Hyperthermus butylicus (strain DSM 5456 / JCM 9403 / PLM1-5).